A 516-amino-acid chain; its full sequence is rRNA N(6)-adenosine-methyltransferase ZCCHC4 (516 aa).

Zn(2+)-binding residues include Cys40, His42, Cys66, Cys75, Cys127, Cys130, His142, and His145. The segment at 40-84 (CPHELGPTLLFVKVNQGKEETRRFYACSACRDRKDCNFFQWEDEK) adopts a GRF-type zinc-finger fold. Residues 174–177 (QYLF), Arg204, Asp227, 245–246 (NM), and Asp278 each bind S-adenosyl-L-methionine. Residues 339 to 360 (QVVDYDNHALYKHGKTGRKQSP) are regulatory loop. Positions 383, 386, 396, 397, 400, 403, 413, 414, 417, 420, 427, 428, 431, 434, 439, and 441 each coordinate Zn(2+). The 51-residue stretch at 398 to 448 (EHCNSCTSKDGRKWNHCFLCKKCVKPSWIHCSICNHCALPDHSCKGPKDGC) folds into the DHHC domain. The CCHC-type zinc-finger motif lies at 446-463 (DGCFICGELDHKRSACPN). A compositionally biased stretch (basic residues) spans 472–484 (KAVRKQKQRKSNK). The segment at 472–516 (KAVRKQKQRKSNKMKMETTKGQSMNHTSATRKKKRRERTHQYLCS) is disordered. The segment covering 490–499 (TKGQSMNHTS) has biased composition (polar residues). Basic residues predominate over residues 500 to 509 (ATRKKKRRER).

It belongs to the ZCCHC4 family. Interacts with components of the ASC-1 complex TRIP4, ASCC1, ASCC2 and ASCC3. Interact with AHCYL1 and AHCYL2. Interact with YTHDC2.

The protein localises to the cytoplasm. Its subcellular location is the nucleus. It localises to the nucleolus. The catalysed reaction is adenosine(4220) in 28S rRNA + S-adenosyl-L-methionine = N(6)-methyladenosine(4220) in 28S rRNA + S-adenosyl-L-homocysteine + H(+). Its function is as follows. rRNA N6-methyltransferase that specifically methylates the adenine in position 4220 of 28S rRNA. N6-methylation of adenine(4220) in 28S rRNA is required for translation. This chain is rRNA N(6)-adenosine-methyltransferase ZCCHC4, found in Bos taurus (Bovine).